A 335-amino-acid polypeptide reads, in one-letter code: Phosphate acyltransferase (335 aa).

The protein belongs to the PlsX family. In terms of assembly, homodimer. Probably interacts with PlsY.

The protein resides in the cytoplasm. The catalysed reaction is a fatty acyl-[ACP] + phosphate = an acyl phosphate + holo-[ACP]. Its pathway is lipid metabolism; phospholipid metabolism. Catalyzes the reversible formation of acyl-phosphate (acyl-PO(4)) from acyl-[acyl-carrier-protein] (acyl-ACP). This enzyme utilizes acyl-ACP as fatty acyl donor, but not acyl-CoA. This Streptococcus pyogenes serotype M1 protein is Phosphate acyltransferase.